Here is a 670-residue protein sequence, read N- to C-terminus: Carnitine O-acetyltransferase, mitochondrial (670 aa).

His378 functions as the Proton acceptor in the catalytic mechanism. CoA contacts are provided by residues Lys461 and 465-472 (KRHGMSPD). Tyr494 provides a ligand contact to (R)-carnitine. CoA is bound at residue Ser498. Thr507 contributes to the (R)-carnitine binding site. Residue Gln597 coordinates CoA. The Microbody targeting signal motif lies at 668–670 (AKL).

This sequence belongs to the carnitine/choline acetyltransferase family.

The protein resides in the mitochondrion inner membrane. The protein localises to the peroxisome. The enzyme catalyses (R)-carnitine + acetyl-CoA = O-acetyl-(R)-carnitine + CoA. Carnitine acetylase is specific for short chain fatty acids. Carnitine acetylase seems to affect the flux through the pyruvate dehydrogenase complex. It may be involved as well in the transport of acetyl-CoA into mitochondria. The protein is Carnitine O-acetyltransferase, mitochondrial (CAT2) of Saccharomyces cerevisiae (strain ATCC 204508 / S288c) (Baker's yeast).